Consider the following 713-residue polypeptide: Forkhead box protein P2 (713 aa).

Polar residues predominate over residues 1 to 28 (MMQESATETISNSSMNQNGMSTLSSQLD). Disordered regions lie at residues 1 to 44 (MMQE…SSEV) and 283 to 337 (KHGG…TGAS). Over residues 290-303 (TTNNSSSTTSSTTS) the composition is skewed to low complexity. Over residues 313–322 (SIVNGQSSVL) the composition is skewed to polar residues. Positions 324 to 335 (ARRDSSSHEETG) are enriched in basic and acidic residues. The C2H2-type zinc finger occupies 344–369 (GVCKWPGCESICEDFGQFLKHLNNEH). A leucine-zipper region spans residues 386 to 407 (VQQLEIQLSKERERLQAMMTHL). The segment at 420-424 (PLNLV) is CTBP1-binding. Positions 436 to 457 (TSPQSLPQTPTTPTAPVTPITQ) are enriched in low complexity. A disordered region spans residues 436–463 (TSPQSLPQTPTTPTAPVTPITQGPSVIT). The fork-head DNA-binding region spans 502–592 (RPPFTYATLI…SQKITGSPTL (91 aa)). Disordered stretches follow at residues 647–666 (LDHIDSNGNSSPGCSPQPHI) and 676–713 (VIAEDEDCPMSLVTTANHSPELEDDREIEEEPLSEDLE). Residues 697 to 713 (LEDDREIEEEPLSEDLE) show a composition bias toward acidic residues.

Forms homodimers and heterodimers with FOXP1 and FOXP4. Dimerization is required for DNA-binding. Interacts with CTBP1. Interacts with FOXP1. Interacts with TBR1. Interacts with ZMYM2.

The protein resides in the nucleus. Its function is as follows. Transcriptional repressor that may play a role in the specification and differentiation of lung epithelium. May also play a role in developing neural, gastrointestinal and cardiovascular tissues. Can act with CTBP1 to synergistically repress transcription but CTPBP1 is not essential. Plays a role in synapse formation by regulating SRPX2 levels. This chain is Forkhead box protein P2 (FOXP2), found in Gorilla gorilla gorilla (Western lowland gorilla).